Consider the following 162-residue polypeptide: Ribosome maturation factor RimP (162 aa).

This sequence belongs to the RimP family.

It is found in the cytoplasm. Its function is as follows. Required for maturation of 30S ribosomal subunits. This Cupriavidus necator (strain ATCC 17699 / DSM 428 / KCTC 22496 / NCIMB 10442 / H16 / Stanier 337) (Ralstonia eutropha) protein is Ribosome maturation factor RimP.